The primary structure comprises 233 residues: Ribonuclease 3 (233 aa).

Residues 4–126 (LNKLMERLGH…IVGAIYIDAG (123 aa)) enclose the RNase III domain. Glu39 is a binding site for Mg(2+). Asp43 is a catalytic residue. Positions 112 and 115 each coordinate Mg(2+). Glu115 is a catalytic residue. In terms of domain architecture, DRBM spans 153-222 (DAKSLLQEWL…AKRFLELLDD (70 aa)).

This sequence belongs to the ribonuclease III family. Homodimer. Mg(2+) is required as a cofactor.

It localises to the cytoplasm. It carries out the reaction Endonucleolytic cleavage to 5'-phosphomonoester.. Digests double-stranded RNA. Involved in the processing of primary rRNA transcript to yield the immediate precursors to the large and small rRNAs (23S and 16S). Processes some mRNAs, and tRNAs when they are encoded in the rRNA operon. Processes pre-crRNA and tracrRNA of type II CRISPR loci if present in the organism. The chain is Ribonuclease 3 from Coxiella burnetii (strain CbuK_Q154) (Coxiella burnetii (strain Q154)).